We begin with the raw amino-acid sequence, 360 residues long: GTPase Obg (360 aa).

The Obg domain occupies methionine 1–isoleucine 156. Positions alanine 157–proline 360 constitute an OBG-type G domain. GTP is bound by residues glycine 163 to serine 170, phenylalanine 188 to valine 192, aspartate 210 to glycine 213, asparagine 279 to aspartate 282, and serine 341 to valine 343. Serine 170 and threonine 190 together coordinate Mg(2+).

It belongs to the TRAFAC class OBG-HflX-like GTPase superfamily. OBG GTPase family. Monomer. Mg(2+) is required as a cofactor.

The protein resides in the cytoplasm. An essential GTPase which binds GTP, GDP and possibly (p)ppGpp with moderate affinity, with high nucleotide exchange rates and a fairly low GTP hydrolysis rate. Plays a role in control of the cell cycle, stress response, ribosome biogenesis and in those bacteria that undergo differentiation, in morphogenesis control. The sequence is that of GTPase Obg from Helicobacter pylori (strain G27).